Here is a 1610-residue protein sequence, read N- to C-terminus: E3 ubiquitin-protein ligase listerin (1610 aa).

Positions 1 to 10 are enriched in basic and acidic residues; it reads MKKKSTDLYG. Residues 1 to 20 are disordered; the sequence is MKKKSTDLYGRKNPGMQSMS. 12 HEAT repeats span residues 110–148, 314–351, 372–408, 409–443, 590–626, 627–664, 736–773, 965–1003, 1119–1156, 1322–1354, 1355–1393, and 1435–1473; these read LKIF…SDRA, VPML…NLIT, IGAM…EVYD, CLLN…RYFK, SPAF…SFDE, LENI…TAVF, KSLY…KALE, GKMP…VVSN, CCFL…MSVV, RVYL…HAMD, LLRP…YSSA, and FTGY…KVNR. The RING-type; atypical zinc-finger motif lies at 1558-1604; sequence CAICYSVLSVERTLPNKRCGTCRHKFHASCLYKWFKSSNSSRCPLCR.

Belongs to the LTN1 family. In terms of assembly, component of the ribosome quality control complex (RQC), composed of the E3 ubiquitin ligase rkr1/ltn1, rqc1 and mtr1/rqc2, as well as cdc48 and its ubiquitin-binding cofactors. RQC forms a stable complex with 60S ribosomal subunits.

The protein resides in the nucleus. It is found in the cytoplasm. Its subcellular location is the cytosol. It carries out the reaction S-ubiquitinyl-[E2 ubiquitin-conjugating enzyme]-L-cysteine + [acceptor protein]-L-lysine = [E2 ubiquitin-conjugating enzyme]-L-cysteine + N(6)-ubiquitinyl-[acceptor protein]-L-lysine.. It functions in the pathway protein modification; protein ubiquitination. Functionally, E3 ubiquitin-protein ligase component of the ribosome quality control complex (RQC), a ribosome-associated complex that mediates ubiquitination and extraction of incompletely synthesized nascent chains for proteasomal degradation. Mediates ubiquitination of proteins derived from mRNAs lacking stop codons (non-stop proteins) and other translation arrest products induced by poly-lysine sequences and tandem rare codons. Ubiquitination leads to cdc48 recruitment for extraction and degradation of the incomplete translation product. May indirectly play a role in chromatin function and transcription. The protein is E3 ubiquitin-protein ligase listerin of Schizosaccharomyces pombe (strain 972 / ATCC 24843) (Fission yeast).